The primary structure comprises 248 residues: Endonuclease V (248 aa).

The Mg(2+) site is built by Asp-54 and Asp-118.

It belongs to the endonuclease V family. Mg(2+) is required as a cofactor.

The protein localises to the cytoplasm. It carries out the reaction Endonucleolytic cleavage at apurinic or apyrimidinic sites to products with a 5'-phosphate.. DNA repair enzyme involved in the repair of deaminated bases. Selectively cleaves double-stranded DNA at the second phosphodiester bond 3' to a deoxyinosine leaving behind the intact lesion on the nicked DNA. This is Endonuclease V from Natronomonas pharaonis (strain ATCC 35678 / DSM 2160 / CIP 103997 / JCM 8858 / NBRC 14720 / NCIMB 2260 / Gabara) (Halobacterium pharaonis).